Here is a 293-residue protein sequence, read N- to C-terminus: uncharacterized protein (293 aa).

2 disordered regions span residues 20–148 and 226–283; these read ELHS…NNNT and RENQ…GNKN. 3 stretches are compositionally biased toward acidic residues: residues 37–47, 56–91, and 99–112; these read LEDDEEYDDDQ, EEFD…DDEM, and NIDD…EEEQ. 2 stretches are compositionally biased toward low complexity: residues 117 to 148 and 232 to 283; these read TNNN…NNNT and NSNS…GNKN.

This is an uncharacterized protein from Dictyostelium discoideum (Social amoeba).